The sequence spans 162 residues: NADH-ubiquinone oxidoreductase 24 kDa subunit homolog C11E3.12, mitochondrial (162 aa).

Positions 88, 93, 125, and 129 each coordinate [2Fe-2S] cluster.

This sequence belongs to the complex I 24 kDa subunit family. The cofactor is [2Fe-2S] cluster.

It is found in the mitochondrion. The polypeptide is NADH-ubiquinone oxidoreductase 24 kDa subunit homolog C11E3.12, mitochondrial (Schizosaccharomyces pombe (strain 972 / ATCC 24843) (Fission yeast)).